Here is a 123-residue protein sequence, read N- to C-terminus: Hydrogenase maturation factor HypA (123 aa).

His-2 serves as a coordination point for Ni(2+). Residues Cys-73, Cys-76, Cys-90, and Cys-93 each coordinate Zn(2+).

Belongs to the HypA/HybF family.

Functionally, involved in the maturation of [NiFe] hydrogenases. Required for nickel insertion into the metal center of the hydrogenase. This is Hydrogenase maturation factor HypA from Roseiflexus sp. (strain RS-1).